Consider the following 262-residue polypeptide: Ribosome-recycling factor, mitochondrial (262 aa).

The N-terminal 55 residues, 1–55 (MASGIRCFRLLHPAFRSYHAALTRPVSEVSMKTVSGRQHGHRQYSAYPAVPVRHF), are a transit peptide targeting the mitochondrion.

It belongs to the RRF family.

Its subcellular location is the mitochondrion. Responsible for the disassembly of ribosomes from messenger RNA at the termination of mitochondrial protein biosynthesis. Acts in collaboration with GFM2. Promotes mitochondrial ribosome recycling by dissolution of intersubunit contacts. The polypeptide is Ribosome-recycling factor, mitochondrial (Mrrf) (Mus musculus (Mouse)).